The primary structure comprises 101 residues: Carboxysome shell vertex protein CcmL (101 aa).

The region spanning 1–84 is the BMV domain; that stretch reads MQIAKVRGTV…VDAAVVAIID (84 aa).

It belongs to the CcmL/EutN family. CcmL subfamily. In terms of assembly, homopentamer. Interacts with full-length CcmM.

The protein localises to the carboxysome. Its function is as follows. Probably forms vertices in the carboxysome, a polyhedral inclusion where RuBisCO (ribulose bisphosphate carboxylase, rbcL-rbcS) is sequestered. Has been modeled to induce curvature upon insertion into an otherwise flat hexagonal molecular layer of CcmK subunits. This is Carboxysome shell vertex protein CcmL from Nostoc sp. (strain PCC 7120 / SAG 25.82 / UTEX 2576).